A 362-amino-acid chain; its full sequence is Peptide chain release factor 1 (362 aa).

Gln240 is subject to N5-methylglutamine.

Belongs to the prokaryotic/mitochondrial release factor family. In terms of processing, methylated by PrmC. Methylation increases the termination efficiency of RF1.

The protein localises to the cytoplasm. Functionally, peptide chain release factor 1 directs the termination of translation in response to the peptide chain termination codons UAG and UAA. This is Peptide chain release factor 1 from Bifidobacterium adolescentis (strain ATCC 15703 / DSM 20083 / NCTC 11814 / E194a).